The chain runs to 495 residues: Probable lysine-specific demethylase 4A (495 aa).

The JmjN domain occupies 18 to 60 (IMTFRPSYEEFQNFSAYIEYIESRGAHLAGLAKIQPPAEWVPR). Tyrosine 139 contributes to the 2-oxoglutarate binding site. The JmjC domain occupies 149–315 (DEDLDVWNIG…YGKRASICRC (167 aa)). The Fe cation site is built by histidine 195 and glutamate 197. 2 residues coordinate 2-oxoglutarate: asparagine 205 and lysine 213. Residues cysteine 241 and histidine 247 each coordinate Zn(2+). Lysine 248 provides a ligand contact to 2-oxoglutarate. Residue histidine 283 coordinates Fe cation. Residues cysteine 313 and cysteine 315 each coordinate Zn(2+). Phosphoserine is present on serine 409.

This sequence belongs to the JHDM3 histone demethylase family. The cofactor is Fe(2+).

The protein resides in the nucleus. The enzyme catalyses N(6),N(6),N(6)-trimethyl-L-lysyl(9)-[histone H3] + 2 2-oxoglutarate + 2 O2 = N(6)-methyl-L-lysyl(9)-[histone H3] + 2 formaldehyde + 2 succinate + 2 CO2. It carries out the reaction N(6),N(6),N(6)-trimethyl-L-lysyl(36)-[histone H3] + 2 2-oxoglutarate + 2 O2 = N(6)-methyl-L-lysyl(36)-[histone H3] + 2 formaldehyde + 2 succinate + 2 CO2. Functionally, probable histone demethylase that specifically demethylates 'Lys-9' and 'Lys-36' residues of histone H3, thereby playing a central role in histone code. Demethylation of Lys residue generates formaldehyde and succinate. The sequence is that of Probable lysine-specific demethylase 4A (Kdm4A) from Drosophila melanogaster (Fruit fly).